The sequence spans 448 residues: D-inositol 3-phosphate glycosyltransferase (448 aa).

The disordered stretch occupies residues 1-21 (MAEQHTGVGRQRGARPWPRPR). Histidine 29 is a binding site for 1D-myo-inositol 3-phosphate. UDP-N-acetyl-alpha-D-glucosamine is bound by residues 35 to 36 (QP) and glycine 43. 1D-myo-inositol 3-phosphate contacts are provided by residues 40-45 (DAGGMN), lysine 98, tyrosine 131, threonine 155, and arginine 175. UDP-N-acetyl-alpha-D-glucosamine contacts are provided by arginine 255, lysine 260, and glutamine 321. Residues tyrosine 330, arginine 331, and alanine 333 each coordinate Mg(2+). UDP-N-acetyl-alpha-D-glucosamine is bound by residues glutamate 343 and glutamate 351. Threonine 357 is a Mg(2+) binding site.

It belongs to the glycosyltransferase group 1 family. MshA subfamily. As to quaternary structure, homodimer.

The enzyme catalyses 1D-myo-inositol 3-phosphate + UDP-N-acetyl-alpha-D-glucosamine = 1D-myo-inositol 2-acetamido-2-deoxy-alpha-D-glucopyranoside 3-phosphate + UDP + H(+). Functionally, catalyzes the transfer of a N-acetyl-glucosamine moiety to 1D-myo-inositol 3-phosphate to produce 1D-myo-inositol 2-acetamido-2-deoxy-glucopyranoside 3-phosphate in the mycothiol biosynthesis pathway. The polypeptide is D-inositol 3-phosphate glycosyltransferase (Salinispora arenicola (strain CNS-205)).